Consider the following 497-residue polypeptide: Early growth response protein 1-A (497 aa).

Low complexity predominate over residues 139–165; sequence SPSSAPSSSPSSSSSSSSSQSPPLSCS. Disordered stretches follow at residues 139-169, 175-194, and 286-309; these read SPSSAPSSSPSSSSSSSSSQSPPLSCSVQSN, YSAAPTFPNSSSEIFPDHSP, and PSRMRKYPNRPSKTPPHERPYGCP. 3 C2H2-type zinc fingers span residues 306–330, 336–358, and 364–386; these read YGCPVESCDRRFSRSDELTRHIRIH, FQCRICMRNFSRSDHLTTHIRTH, and FACDICGRKFARSDERKRHTKIH. A disordered region spans residues 377 to 441; sequence DERKRHTKIH…SYPSPVHSSF (65 aa). Residues 381-391 are compositionally biased toward basic residues; it reads RHTKIHLRQKD. The segment covering 397–441 has biased composition (low complexity); sequence ATPVSVASPVSSYSPSASTSYPSPVPTSYSSPVSSSYPSPVHSSF.

The protein belongs to the EGR C2H2-type zinc-finger protein family. As to expression, expressed in the presumptive mesoderm. In blastula embryos, expressed in the dorsal marginal zone, and at the onset of gastrulation expression is specific to the Spemann organizer. As gastrulation proceeds, expressed in a ring around the yolk plug. This expression is maintained in advanced gastrulae, with weak expression also extending into the dorsal midline. By the neurula stage, expression is excluded from the notochord. In late tailbud stages, expressed in two spots in the anterior forebrain, which are connected via a bridge of cells that also show expression.

It is found in the nucleus. The protein resides in the cytoplasm. In terms of biological role, transcriptional regulator. Recognizes and binds to the DNA sequence 5'-GCG(T/G)GGGCG-3'(EGR-site) in the promoter region of target genes. Binds double-stranded target DNA, irrespective of the cytosine methylation status. Regulates the transcription of numerous target genes, and thereby plays an important role in regulating the response to growth factors, DNA damage, and ischemia. Plays a role in the regulation of cell survival, proliferation and cell death. Mediates responses to ischemia and hypoxia; regulates the expression of proteins that are involved in inflammatory processes. Plays a role in regulating the expression of circadian clock genes. This is Early growth response protein 1-A (egr1-a) from Xenopus laevis (African clawed frog).